The primary structure comprises 515 residues: Integrator complex subunit 14 (515 aa).

The region spanning P2 to L204 is the VWFA domain. Mg(2+)-binding residues include S10, S12, and T86. K418 bears the N6-acetyllysine mark.

The protein belongs to the Integrator subunit 14 family. As to quaternary structure, component of the Integrator complex, composed of core subunits INTS1, INTS2, INTS3, INTS4, INTS5, INTS6, INTS7, INTS8, INTS9/RC74, INTS10, INTS11/CPSF3L, INTS12, INTS13, INTS14 and INTS15. The core complex associates with protein phosphatase 2A subunits PPP2CA and PPP2R1A, to form the Integrator-PP2A (INTAC) complex. INTS14 is part of the tail subcomplex, composed of INTS10, INTS13, INTS14 and INTS15.

It is found in the nucleus. Component of the integrator complex, a multiprotein complex that terminates RNA polymerase II (Pol II) transcription in the promoter-proximal region of genes. The integrator complex provides a quality checkpoint during transcription elongation by driving premature transcription termination of transcripts that are unfavorably configured for transcriptional elongation: the complex terminates transcription by (1) catalyzing dephosphorylation of the C-terminal domain (CTD) of Pol II subunit POLR2A/RPB1 and SUPT5H/SPT5, (2) degrading the exiting nascent RNA transcript via endonuclease activity and (3) promoting the release of Pol II from bound DNA. The integrator complex is also involved in terminating the synthesis of non-coding Pol II transcripts, such as enhancer RNAs (eRNAs), small nuclear RNAs (snRNAs), telomerase RNAs and long non-coding RNAs (lncRNAs). Within the integrator complex, INTS14 is part of the integrator tail module that acts as a platform for the recruitment of transcription factors at promoters. This Mus musculus (Mouse) protein is Integrator complex subunit 14.